The primary structure comprises 328 residues: Phenylalanine--tRNA ligase alpha subunit (328 aa).

Glu245 contacts Mg(2+).

Belongs to the class-II aminoacyl-tRNA synthetase family. Phe-tRNA synthetase alpha subunit type 1 subfamily. Tetramer of two alpha and two beta subunits. Requires Mg(2+) as cofactor.

Its subcellular location is the cytoplasm. It catalyses the reaction tRNA(Phe) + L-phenylalanine + ATP = L-phenylalanyl-tRNA(Phe) + AMP + diphosphate + H(+). The polypeptide is Phenylalanine--tRNA ligase alpha subunit (Helicobacter pylori (strain G27)).